The sequence spans 104 residues: MGQPAKVLQLFKTLHRTRQQVFKNDKRALEAARVKINEEFKKHKNETSPEKIKEMLKIGSDVELLLRTSVIQGIHTDHDTLQLVPRKDLLTENVPYCDAPTQKL.

At S60 the chain carries Phosphoserine.

The protein belongs to the complex I LYR family. As to quaternary structure, interacts with UQCRFS1.

It localises to the mitochondrion matrix. In terms of biological role, assembly factor required for Rieske Fe-S protein UQCRFS1 incorporation into the cytochrome b-c1 (CIII) complex. Functions as a chaperone, binding to this subunit within the mitochondrial matrix and stabilizing it prior to its translocation and insertion into the late CIII dimeric intermediate within the mitochondrial inner membrane. In Rattus norvegicus (Rat), this protein is Complex III assembly factor LYRM7 (Lyrm7).